The following is a 107-amino-acid chain: DQDCLPGWSFYEGNCYKAFDEPKSWVDAEKFCQKQSNGKHLASIEGLGKANFVAKLVSEDQSETLREPQIHVWIGLRDQSERQQCSSHWTDGSAVSYECGLAYPFIC.

Disulfide bonds link C4–C15 and C32–C107. In terms of domain architecture, C-type lectin spans 11–107 (YEGNCYKAFD…ECGLAYPFIC (97 aa)).

It belongs to the snaclec family. Heterodimer of subunits alpha and beta; disulfide-linked. Expressed by the venom gland.

The protein localises to the secreted. In terms of biological role, inhibits integrin alpha-2/beta-1- (ITGA2/ITGB1) dependent melanoma metastasis. The polypeptide is Snaclec VP12 subunit A (Daboia palaestinae (Palestine viper)).